The chain runs to 256 residues: Indole-3-glycerol phosphate synthase (256 aa).

Belongs to the TrpC family.

It catalyses the reaction 1-(2-carboxyphenylamino)-1-deoxy-D-ribulose 5-phosphate + H(+) = (1S,2R)-1-C-(indol-3-yl)glycerol 3-phosphate + CO2 + H2O. It participates in amino-acid biosynthesis; L-tryptophan biosynthesis; L-tryptophan from chorismate: step 4/5. The polypeptide is Indole-3-glycerol phosphate synthase (Caldanaerobacter subterraneus subsp. tengcongensis (strain DSM 15242 / JCM 11007 / NBRC 100824 / MB4) (Thermoanaerobacter tengcongensis)).